The following is a 554-amino-acid chain: Dihydroxy-acid dehydratase (554 aa).

Aspartate 78 contributes to the Mg(2+) binding site. Residue cysteine 119 participates in [2Fe-2S] cluster binding. Mg(2+) contacts are provided by aspartate 120 and lysine 121. Lysine 121 is modified (N6-carboxylysine). Cysteine 192 is a binding site for [2Fe-2S] cluster. Glutamate 443 is a binding site for Mg(2+). The Proton acceptor role is filled by serine 469.

It belongs to the IlvD/Edd family. As to quaternary structure, homodimer. [2Fe-2S] cluster serves as cofactor. Mg(2+) is required as a cofactor.

The enzyme catalyses (2R)-2,3-dihydroxy-3-methylbutanoate = 3-methyl-2-oxobutanoate + H2O. The catalysed reaction is (2R,3R)-2,3-dihydroxy-3-methylpentanoate = (S)-3-methyl-2-oxopentanoate + H2O. It functions in the pathway amino-acid biosynthesis; L-isoleucine biosynthesis; L-isoleucine from 2-oxobutanoate: step 3/4. It participates in amino-acid biosynthesis; L-valine biosynthesis; L-valine from pyruvate: step 3/4. Functionally, functions in the biosynthesis of branched-chain amino acids. Catalyzes the dehydration of (2R,3R)-2,3-dihydroxy-3-methylpentanoate (2,3-dihydroxy-3-methylvalerate) into 2-oxo-3-methylpentanoate (2-oxo-3-methylvalerate) and of (2R)-2,3-dihydroxy-3-methylbutanoate (2,3-dihydroxyisovalerate) into 2-oxo-3-methylbutanoate (2-oxoisovalerate), the penultimate precursor to L-isoleucine and L-valine, respectively. In Clostridium novyi (strain NT), this protein is Dihydroxy-acid dehydratase.